We begin with the raw amino-acid sequence, 178 residues long: ATP synthase subunit d, mitochondrial (178 aa).

Residues 149–178 (NKPTFWPHTPEEQVGYKSKEQLEAEAQGHH) form a disordered region. The segment covering 165-178 (KSKEQLEAEAQGHH) has biased composition (basic and acidic residues).

The protein belongs to the ATPase d subunit family. In terms of assembly, F-type ATPases have 2 components, CF(1) - the catalytic core - and CF(0) - the membrane proton channel. CF(0) seems to have nine subunits: a, b, c, d, e, f, g, F6 and 8 (or A6L).

The protein resides in the mitochondrion. The protein localises to the mitochondrion inner membrane. Functionally, mitochondrial membrane ATP synthase (F(1)F(0) ATP synthase or Complex V) produces ATP from ADP in the presence of a proton gradient across the membrane which is generated by electron transport complexes of the respiratory chain. F-type ATPases consist of two structural domains, F(1) - containing the extramembraneous catalytic core, and F(0) - containing the membrane proton channel, linked together by a central stalk and a peripheral stalk. During catalysis, ATP synthesis in the catalytic domain of F(1) is coupled via a rotary mechanism of the central stalk subunits to proton translocation. Part of the complex F(0) domain and the peripheric stalk, which acts as a stator to hold the catalytic alpha(3)beta(3) subcomplex and subunit a/ATP6 static relative to the rotary elements. The sequence is that of ATP synthase subunit d, mitochondrial from Drosophila melanogaster (Fruit fly).